Consider the following 312-residue polypeptide: Serine/threonine-protein phosphatase CPPED1 (312 aa).

Serine 2 carries the post-translational modification Phosphoserine. A catalytic region spans residues 47 to 250 (KAWSTGNCDN…AVFSGHYHRN (204 aa)). The a divalent metal cation site is built by aspartate 90, asparagine 127, and histidine 246. Serine 293 carries the post-translational modification Phosphoserine.

It belongs to the metallophosphoesterase superfamily. CPPED1 family. A divalent metal cation serves as cofactor.

The protein localises to the cytoplasm. The enzyme catalyses O-phospho-L-seryl-[protein] + H2O = L-seryl-[protein] + phosphate. It catalyses the reaction O-phospho-L-threonyl-[protein] + H2O = L-threonyl-[protein] + phosphate. In terms of biological role, protein phosphatase that dephosphorylates AKT family kinase specifically at 'Ser-473', blocking cell cycle progression and promoting cell apoptosis. May play an inhibitory role in glucose uptake by adipocytes. The chain is Serine/threonine-protein phosphatase CPPED1 (Cpped1) from Rattus norvegicus (Rat).